The primary structure comprises 90 residues: DNA-directed RNA polymerase subunit omega (90 aa).

The protein belongs to the RNA polymerase subunit omega family. In terms of assembly, the RNAP catalytic core consists of 2 alpha, 1 beta, 1 beta' and 1 omega subunit. When a sigma factor is associated with the core the holoenzyme is formed, which can initiate transcription.

The enzyme catalyses RNA(n) + a ribonucleoside 5'-triphosphate = RNA(n+1) + diphosphate. Functionally, promotes RNA polymerase assembly. Latches the N- and C-terminal regions of the beta' subunit thereby facilitating its interaction with the beta and alpha subunits. Required for kasugamycin production and aerial mycelium formation in S.kasugaensis and responsible for pleiotropy. This chain is DNA-directed RNA polymerase subunit omega (rpoZ), found in Streptomyces kasugaensis.